The chain runs to 244 residues: Tetraspanin-2A (244 aa).

The Cytoplasmic segment spans residues 1–22 (MGIGYGASDEQLEKQIGCVKYT). Residues 23–43 (LFCFNIVAWMISTALFALTVW) form a helical membrane-spanning segment. Over 44-61 (LRAEPGFNDWLRILEAQS) the chain is Extracellular. Residues 62–82 (FYIGVYVLIGISIVMMAVSFL) form a helical membrane-spanning segment. At 83 to 91 (GCLSALMEN) the chain is on the cytoplasmic side. The helical transmembrane segment at 92–112 (TLALFVFVGTQVFGFIAIVAG) threads the bilayer. The Extracellular segment spans residues 113–206 (SAVLLQFSTI…TWFFEGKTGW (94 aa)). Residues 207–227 (IVALAMTLGLLNVICAVMSFV) form a helical membrane-spanning segment. Residues 228-244 (LVQAVKKEEEQASNYRR) lie on the Cytoplasmic side of the membrane.

The protein belongs to the tetraspanin (TM4SF) family. In terms of assembly, forms a complex with Ssk and mesh.

It localises to the apicolateral cell membrane. It is found in the cell junction. The protein localises to the septate junction. In terms of biological role, required for assembly of smooth septate junctions (sSJs), together with Ssk and mesh. Important for barrier function of the midgut epithelium. The sequence is that of Tetraspanin-2A from Drosophila melanogaster (Fruit fly).